The chain runs to 250 residues: uncharacterized protein (250 aa).

Belongs to the carbohydrate kinase PfkB family.

This is an uncharacterized protein from Archaeoglobus fulgidus (strain ATCC 49558 / DSM 4304 / JCM 9628 / NBRC 100126 / VC-16).